The following is a 366-amino-acid chain: Mitogen-activated protein kinase CPK1 (366 aa).

In terms of domain architecture, Protein kinase spans 17 to 302 (KLEEIVGEGA…SPSKRITVEE (286 aa)). ATP contacts are provided by residues 22–30 (VGEGAYGLV) and K45. D140 acts as the Proton acceptor in catalysis. Residue T181 is modified to Phosphothreonine. A TXY motif is present at residues 181-183 (TEY). A Phosphotyrosine modification is found at Y183.

This sequence belongs to the protein kinase superfamily. CMGC Ser/Thr protein kinase family. MAP kinase subfamily. It depends on Mg(2+) as a cofactor. In terms of processing, dually phosphorylated on Thr-181 and Tyr-183, which activates the enzyme.

The enzyme catalyses L-seryl-[protein] + ATP = O-phospho-L-seryl-[protein] + ADP + H(+). The catalysed reaction is L-threonyl-[protein] + ATP = O-phospho-L-threonyl-[protein] + ADP + H(+). With respect to regulation, activated by tyrosine and threonine phosphorylation. Functionally, responds to activation by environmental stress by phosphorylating downstream targets. The chain is Mitogen-activated protein kinase CPK1 (CPK1) from Cryptococcus neoformans var. neoformans serotype D (strain B-3501A) (Filobasidiella neoformans).